We begin with the raw amino-acid sequence, 260 residues long: UPF0246 protein BURPS668_1321 (260 aa).

This sequence belongs to the UPF0246 family.

This chain is UPF0246 protein BURPS668_1321, found in Burkholderia pseudomallei (strain 668).